Here is a 224-residue protein sequence, read N- to C-terminus: Claudin-19 (224 aa).

Over 1 to 7 the chain is Cytoplasmic; sequence MANSGLQ. Residues 8-28 form a helical membrane-spanning segment; that stretch reads LLGYFLALGGWVGIIASTALP. Over 29 to 81 the chain is Extracellular; sequence QWKQSSYAGDAIITAVGLYEGLWMSCASQSTGQVQCKLYDSLLALDGHIQSAR. The cysteines at positions 54 and 64 are disulfide-linked. The chain crosses the membrane as a helical span at residues 82-102; that stretch reads ALMVVAVLLGFVAMVLSVVGM. Over 103 to 117 the chain is Cytoplasmic; that stretch reads KCTRVGDSNPTAKSR. A helical membrane pass occupies residues 118–138; that stretch reads VAISGGALFLLAGLCTLTAVS. Residues 139 to 160 are Extracellular-facing; it reads WYATLVTQEFFNPSTPVNARYE. A helical membrane pass occupies residues 161 to 181; sequence FGPALFVGWASAGLAMLGGSF. Topologically, residues 182-224 are cytoplasmic; sequence LCCTCPEPERANSIPQPYRSGPSTAAREPVVKLPASVKGPLGV.

It belongs to the claudin family. Can form homo- and heteropolymeric tight junction strands. Interacts with other claudins including CLDN3, CLDN10, CLDN16 and CLDN18 with highest affinity for CLDN16. Interacts (via PDZ-binding motif TRV) with TJP1 (via PDZ domain). As to quaternary structure, (Microbial infection) Interacts (via both extracellular domains) with Clostridium perfringens enterotoxin CPE; the interaction disrupts claudin assembly in tight junctions. Expressed in the corticomedullary axis of the TAL, specifically in the cortex and the outer stripe of outer medulla (OSOM) zone (at protein level). Expressed in peripheral nervous system, in Schwan cells (at protein level).

Its subcellular location is the cell junction. It localises to the tight junction. It is found in the cell membrane. It catalyses the reaction Mg(2+)(in) = Mg(2+)(out). The catalysed reaction is Ca(2+)(in) = Ca(2+)(out). It carries out the reaction Na(+)(in) = Na(+)(out). The enzyme catalyses K(+)(in) = K(+)(out). It catalyses the reaction Rb(+)(in) = Rb(+)(out). The catalysed reaction is Cs(+)(in) = Cs(+)(out). It carries out the reaction Li(+)(in) = Li(+)(out). In terms of biological role, forms paracellular channels: coassembles with CLDN16 into tight junction strands with cation-selective channels through the strands, conveying epithelial permeability in a process known as paracellular tight junction permeability. Involved in the maintenance of ion gradients along the nephron. In the thick ascending limb (TAL) of Henle's loop, facilitates sodium paracellular permeability from the interstitial compartment to the lumen, contributing to the lumen-positive transepithelial potential that drives paracellular magnesium and calcium reabsorption. Forms paracellular barriers on its own. In the peripheral nervous system, represents a major constituent of the tight junctions in Schwann cells and contributes to electrical sealing. During retinal neurogenesis, may regulate the barrier properties of tight junctions in retinal pigment epithelium, required for proper retinal tissue differentiation and vision. This chain is Claudin-19, found in Mus musculus (Mouse).